Reading from the N-terminus, the 253-residue chain is Tetraspanin-3 (253 aa).

Residues 1-11 lie on the Cytoplasmic side of the membrane; the sequence is MGQCGITSSKT. Residues 12–32 form a helical membrane-spanning segment; that stretch reads VLVFLNLIFWGAAGILCYVGA. Residues 33–50 are Extracellular-facing; sequence YVFITYDDYDHFFEDVYT. The helical transmembrane segment at 51-71 threads the bilayer; the sequence is LIPAVVIIAVGALLFIIGLIG. Residues 72-85 are Cytoplasmic-facing; it reads CCATIRESRCGLAT. Residues 86–106 form a helical membrane-spanning segment; sequence FVIILLLVFVTEVVVVVLGYV. Topologically, residues 107-212 are extracellular; the sequence is YRAKVENEVD…KKLQEIMMHV (106 aa). Asn-127, Asn-152, Asn-167, and Asn-183 each carry an N-linked (GlcNAc...) asparagine glycan. The chain crosses the membrane as a helical span at residues 213–233; it reads IWAALAFAAIQLLGMLCACIV. The Cytoplasmic portion of the chain corresponds to 234-253; it reads LCRRSRDPAYELLITGGTYA.

It belongs to the tetraspanin (TM4SF) family. As to quaternary structure, interacts with claudin-11/CLDN11 and integrins.

It is found in the membrane. Its function is as follows. Regulates the proliferation and migration of oligodendrocytes, a process essential for normal myelination and repair. This Homo sapiens (Human) protein is Tetraspanin-3 (TSPAN3).